The sequence spans 624 residues: Protein FAM234B (624 aa).

Residues Met-1 to Leu-91 are disordered. Residue Ser-16 is modified to Phosphoserine. At Thr-26 the chain carries Phosphothreonine. A phosphoserine mark is found at Ser-30, Ser-33, and Ser-63. Residues Val-107–Pro-127 form a helical membrane-spanning segment.

The protein belongs to the FAM234 family.

It localises to the membrane. It is found in the golgi outpost. The protein localises to the cytoplasm. Its subcellular location is the cytoskeleton. The protein resides in the microtubule organizing center. The protein is Protein FAM234B of Mus musculus (Mouse).